The sequence spans 130 residues: Small ribosomal subunit protein uS9 (130 aa).

It belongs to the universal ribosomal protein uS9 family.

This Pseudomonas putida (strain ATCC 700007 / DSM 6899 / JCM 31910 / BCRC 17059 / LMG 24140 / F1) protein is Small ribosomal subunit protein uS9.